A 210-amino-acid polypeptide reads, in one-letter code: MKGKFIVIEGLEGAGKSSAHQSVVRVLHELGIKDVVFTREPGGTPLAEKLRHLIKHETEEPVTDKAELLMLYAARIQLVENVIKPALMQGKWVVGDRHDMSSQAYQGGGRQLDPHFMLTLKETVLGDFEPDLTIYLDIDPIVGLARARGRGELDRIEQMDLDFFRRTRARYLALVKDNPKAVMINAEQSIELVQADIERAVKNWWKSNEK.

Residue 10-17 coordinates ATP; the sequence is GLEGAGKS.

Belongs to the thymidylate kinase family.

It catalyses the reaction dTMP + ATP = dTDP + ADP. Its function is as follows. Phosphorylation of dTMP to form dTDP in both de novo and salvage pathways of dTTP synthesis. The chain is Thymidylate kinase from Haemophilus influenzae (strain PittGG).